The sequence spans 95 residues: Aspartyl/glutamyl-tRNA(Asn/Gln) amidotransferase subunit C (95 aa).

It belongs to the GatC family. Heterotrimer of A, B and C subunits.

It catalyses the reaction L-glutamyl-tRNA(Gln) + L-glutamine + ATP + H2O = L-glutaminyl-tRNA(Gln) + L-glutamate + ADP + phosphate + H(+). The catalysed reaction is L-aspartyl-tRNA(Asn) + L-glutamine + ATP + H2O = L-asparaginyl-tRNA(Asn) + L-glutamate + ADP + phosphate + 2 H(+). Allows the formation of correctly charged Asn-tRNA(Asn) or Gln-tRNA(Gln) through the transamidation of misacylated Asp-tRNA(Asn) or Glu-tRNA(Gln) in organisms which lack either or both of asparaginyl-tRNA or glutaminyl-tRNA synthetases. The reaction takes place in the presence of glutamine and ATP through an activated phospho-Asp-tRNA(Asn) or phospho-Glu-tRNA(Gln). The sequence is that of Aspartyl/glutamyl-tRNA(Asn/Gln) amidotransferase subunit C from Prochlorococcus marinus (strain NATL2A).